Here is a 256-residue protein sequence, read N- to C-terminus: Thiazole synthase (256 aa).

Residue lysine 98 is the Schiff-base intermediate with DXP of the active site. Residues glycine 159, 185–186 (AG), and 207–208 (NT) contribute to the 1-deoxy-D-xylulose 5-phosphate site.

It belongs to the ThiG family. Homotetramer. Forms heterodimers with either ThiH or ThiS.

The protein resides in the cytoplasm. It carries out the reaction [ThiS sulfur-carrier protein]-C-terminal-Gly-aminoethanethioate + 2-iminoacetate + 1-deoxy-D-xylulose 5-phosphate = [ThiS sulfur-carrier protein]-C-terminal Gly-Gly + 2-[(2R,5Z)-2-carboxy-4-methylthiazol-5(2H)-ylidene]ethyl phosphate + 2 H2O + H(+). The protein operates within cofactor biosynthesis; thiamine diphosphate biosynthesis. Its function is as follows. Catalyzes the rearrangement of 1-deoxy-D-xylulose 5-phosphate (DXP) to produce the thiazole phosphate moiety of thiamine. Sulfur is provided by the thiocarboxylate moiety of the carrier protein ThiS. In vitro, sulfur can be provided by H(2)S. The polypeptide is Thiazole synthase (Syntrophobacter fumaroxidans (strain DSM 10017 / MPOB)).